An 86-amino-acid polypeptide reads, in one-letter code: uncharacterized protein (86 aa).

The protein localises to the mitochondrion. This is an uncharacterized protein from Marchantia polymorpha (Common liverwort).